The primary structure comprises 196 residues: MGVLENIVPGELYDANYDPDLLKIRKETKIKLHEYNTLSPADENKKSQVIRELLGSCTDNFIIEPPFYCDYGSNIYIGDNFYANHNLVILDGAKVVIGDNVFIAPNVGIYTAGHPIDVERRLQGLEYAMPVTIGDNVWIGGGVSIIPGVNIGKNSVIAAGSVVIRDIPENVVAAGNPCKVIRKITEKDSTTTNYRK.

Acetyl-CoA is bound at residue asparagine 84. Histidine 114 serves as the catalytic Proton donor/acceptor. Residues glycine 141, alanine 159, 164–165 (IR), lysine 179, and arginine 182 contribute to the acetyl-CoA site.

Belongs to the transferase hexapeptide repeat family. Homodimer.

The polypeptide is Putative acetyltransferase YJL218W (Saccharomyces cerevisiae (strain ATCC 204508 / S288c) (Baker's yeast)).